The following is a 423-amino-acid chain: Serine hydroxymethyltransferase (423 aa).

Residues leucine 120 and 124-126 each bind (6S)-5,6,7,8-tetrahydrofolate; that span reads GHL. Residue lysine 229 is modified to N6-(pyridoxal phosphate)lysine. Residue 353–355 participates in (6S)-5,6,7,8-tetrahydrofolate binding; it reads SPF.

It belongs to the SHMT family. As to quaternary structure, homodimer. Requires pyridoxal 5'-phosphate as cofactor.

The protein localises to the cytoplasm. It carries out the reaction (6R)-5,10-methylene-5,6,7,8-tetrahydrofolate + glycine + H2O = (6S)-5,6,7,8-tetrahydrofolate + L-serine. It functions in the pathway one-carbon metabolism; tetrahydrofolate interconversion. The protein operates within amino-acid biosynthesis; glycine biosynthesis; glycine from L-serine: step 1/1. In terms of biological role, catalyzes the reversible interconversion of serine and glycine with tetrahydrofolate (THF) serving as the one-carbon carrier. This reaction serves as the major source of one-carbon groups required for the biosynthesis of purines, thymidylate, methionine, and other important biomolecules. Also exhibits THF-independent aldolase activity toward beta-hydroxyamino acids, producing glycine and aldehydes, via a retro-aldol mechanism. The protein is Serine hydroxymethyltransferase of Prochlorococcus marinus subsp. pastoris (strain CCMP1986 / NIES-2087 / MED4).